We begin with the raw amino-acid sequence, 114 residues long: Large ribosomal subunit protein bL19 (114 aa).

This sequence belongs to the bacterial ribosomal protein bL19 family.

Functionally, this protein is located at the 30S-50S ribosomal subunit interface and may play a role in the structure and function of the aminoacyl-tRNA binding site. This Clavibacter michiganensis subsp. michiganensis (strain NCPPB 382) protein is Large ribosomal subunit protein bL19.